Here is a 3183-residue protein sequence, read N- to C-terminus: WD repeat- and FYVE domain-containing protein 4 (3183 aa).

A compositionally biased stretch (basic and acidic residues) spans 1–15 (MEAEDLSKTEDRPED). Disordered stretches follow at residues 1-37 (MEAEDLSKTEDRPEDPGFQNEGQSPAVKPSFSLEGQS), 790-811 (AGQEPSVDAQKAEAGGRQGKFK), 938-977 (KSLHLPPGHEDNPGCSGSCAATAEKPTDSSPRPGGSQALR), and 1828-1852 (KETTSESSRNTSSPGASAEASHAAE). The segment covering 1832–1852 (SESSRNTSSPGASAEASHAAE) has biased composition (low complexity). The region spanning 2383–2508 (LDGEKVSQKV…DRSKALKSFS (126 aa)) is the BEACH-type PH domain. The region spanning 2525 to 2819 (NLRKHPGFDR…QIFTKPHPSR (295 aa)) is the BEACH domain. The segment at 2812 to 2836 (FTKPHPSRNTTGKNPGPGKDASTPV) is disordered. WD repeat units lie at residues 2930 to 2969 (LAAWGPCLCAVCPSPTMIVTSGASAVVCIWELSLVKGRPR), 2979 to 3018 (GHTQAVTCLTASVTFSLLVSGSQDRTCILWDLDHLSRVAC), 3021 to 3060 (VHREGISAIAISDVSGTIVSCAGAHLSLWNVNGQPLASIT), 3070 to 3108 (TCCCIVEGPAWDASHVIITGSKDGMVRIWKTEDVKMPVP), and 3150 to 3183 (KASPAVTALAITRNQSKLLVGDEKGRIFCWSADG).

As to quaternary structure, interacts with HSP90AB1. Highly expressed in immune tissues, especially B lymphocytes.

Its subcellular location is the early endosome. It is found in the endoplasmic reticulum. Plays a critical role in the regulation of cDC1-mediated cross-presentation of viral and tumor antigens in dendritic cells. Mechanistically, acts near the plasma membrane and interacts with endosomal membranes to promote endosomal-to-cytosol antigen trafficking. Also plays a role in B-cell survival through regulation of autophagy. The chain is WD repeat- and FYVE domain-containing protein 4 from Mus musculus (Mouse).